The primary structure comprises 343 residues: MPRSFLVKSKKTHTYNQHRYVEEQPVTGVDLVATVYHAHCTECPAEFPAFSTDPTEKQHTPENVITEEARSDPGDPREKIPFLSRSISPNSFQGIALSSMRPLKHYDPSPLSAFYTQNFSWDALHSTYGFKQIPSHIHPSMLQNSINLYSCPPRVDSDSDHPINYSMSYSPKMDTYHCVKCSKVFSTSHGLEVHVRRSHSGTRPFVCNICGKSFGHAVSLEQHLNVHSQERSFECKMCGKTFKRSSTLSTHLLIHSDTRPYPCQFCGKRFHQKSDMKKHTYIHTGEKPHKCQVCGKAFSQSSNLITHSRKHTGFKPFSCDLCCKGFQRKVDLRRHRENQHGLK.

The tract at residues 1-20 (MPRSFLVKSKKTHTYNQHRY) is mediates repression of transcription. An SNAG domain region spans residues 1–20 (MPRSFLVKSKKTHTYNQHRY). Residues 51 to 77 (STDPTEKQHTPENVITEEARSDPGDPR) form a disordered region. Over residues 67–77 (EEARSDPGDPR) the composition is skewed to basic and acidic residues. 6 consecutive C2H2-type zinc fingers follow at residues 176–199 (YHCV…RRSH), 205–227 (FVCN…LNVH), 233–255 (FECK…LLIH), 261–283 (YPCQ…TYIH), 289–311 (HKCQ…SRKH), and 317–340 (FSCD…ENQH).

Its subcellular location is the nucleus. Functionally, essential transcriptional regulator necessary for development and differentiation of erythroid and megakaryocytic lineages. Alters histone methylation by recruiting histone methyltransferase to target genes promoters. Plays a role in heterochromatin formation. This Xenopus laevis (African clawed frog) protein is Zinc finger protein Gfi-1b (gfi1b).